A 334-amino-acid polypeptide reads, in one-letter code: MRYRSDRVKIAIDVMGGDRAPDEILKGALLASKEVEGEIVLIGPEEIVRNKGLPFVSAFEIVKMDDPPLEVLRKKNSSMHVGLKLLSEGKVDAFVSAGATGPLFLGATSIVGKLEGIERPALGVAVPSLKGATVLIDAGANAKVRPEHLVDFAFMGIAYSKVLGAENPRVGLLNMGSEENKGPDDIKRAYQLLKEFLGDTFFGNIEGHDINLGTVDVVVADGFSGNVALKTMEGTAKLVTSVLKESIKDGGFLSLLGALLMKRSFDKMKEKLDPRSYGGTFILGVKGIVVKAHGSSDAKAIKHAIKVAEKGIRMNIVQEIERGISHVRNSGDGR.

This sequence belongs to the PlsX family. Homodimer. Probably interacts with PlsY.

It localises to the cytoplasm. It carries out the reaction a fatty acyl-[ACP] + phosphate = an acyl phosphate + holo-[ACP]. It functions in the pathway lipid metabolism; phospholipid metabolism. In terms of biological role, catalyzes the reversible formation of acyl-phosphate (acyl-PO(4)) from acyl-[acyl-carrier-protein] (acyl-ACP). This enzyme utilizes acyl-ACP as fatty acyl donor, but not acyl-CoA. This chain is Phosphate acyltransferase, found in Thermotoga petrophila (strain ATCC BAA-488 / DSM 13995 / JCM 10881 / RKU-1).